We begin with the raw amino-acid sequence, 172 residues long: S-ribosylhomocysteine lyase (172 aa).

Fe cation-binding residues include histidine 54, histidine 58, and cysteine 128.

This sequence belongs to the LuxS family. As to quaternary structure, homodimer. Requires Fe cation as cofactor.

It carries out the reaction S-(5-deoxy-D-ribos-5-yl)-L-homocysteine = (S)-4,5-dihydroxypentane-2,3-dione + L-homocysteine. Involved in the synthesis of autoinducer 2 (AI-2) which is secreted by bacteria and is used to communicate both the cell density and the metabolic potential of the environment. The regulation of gene expression in response to changes in cell density is called quorum sensing. Catalyzes the transformation of S-ribosylhomocysteine (RHC) to homocysteine (HC) and 4,5-dihydroxy-2,3-pentadione (DPD). The sequence is that of S-ribosylhomocysteine lyase from Aliivibrio fischeri (strain MJ11) (Vibrio fischeri).